A 488-amino-acid chain; its full sequence is Protein nucleotidyltransferase YdiU (488 aa).

ATP is bound by residues Gly-91, Gly-93, Arg-94, Lys-114, Asp-126, Gly-127, Arg-177, and Arg-184. The active-site Proton acceptor is Asp-253. Residues Asn-254 and Asp-263 each contribute to the Mg(2+) site. Asp-263 serves as a coordination point for ATP.

Belongs to the SELO family. Requires Mg(2+) as cofactor. It depends on Mn(2+) as a cofactor.

It carries out the reaction L-seryl-[protein] + ATP = 3-O-(5'-adenylyl)-L-seryl-[protein] + diphosphate. The catalysed reaction is L-threonyl-[protein] + ATP = 3-O-(5'-adenylyl)-L-threonyl-[protein] + diphosphate. The enzyme catalyses L-tyrosyl-[protein] + ATP = O-(5'-adenylyl)-L-tyrosyl-[protein] + diphosphate. It catalyses the reaction L-histidyl-[protein] + UTP = N(tele)-(5'-uridylyl)-L-histidyl-[protein] + diphosphate. It carries out the reaction L-seryl-[protein] + UTP = O-(5'-uridylyl)-L-seryl-[protein] + diphosphate. The catalysed reaction is L-tyrosyl-[protein] + UTP = O-(5'-uridylyl)-L-tyrosyl-[protein] + diphosphate. Its function is as follows. Nucleotidyltransferase involved in the post-translational modification of proteins. It can catalyze the addition of adenosine monophosphate (AMP) or uridine monophosphate (UMP) to a protein, resulting in modifications known as AMPylation and UMPylation. The sequence is that of Protein nucleotidyltransferase YdiU from Bacillus cereus (strain G9842).